The following is a 385-amino-acid chain: 8-amino-7-oxononanoate synthase (385 aa).

Residue Arg-21 coordinates substrate. 108–109 (GF) serves as a coordination point for pyridoxal 5'-phosphate. His-133 contributes to the substrate binding site. The pyridoxal 5'-phosphate site is built by Ser-179, His-207, and Thr-233. Lys-236 bears the N6-(pyridoxal phosphate)lysine mark. Substrate is bound at residue Thr-352.

This sequence belongs to the class-II pyridoxal-phosphate-dependent aminotransferase family. BioF subfamily. Homodimer. Pyridoxal 5'-phosphate is required as a cofactor.

It catalyses the reaction 6-carboxyhexanoyl-[ACP] + L-alanine + H(+) = (8S)-8-amino-7-oxononanoate + holo-[ACP] + CO2. It participates in cofactor biosynthesis; biotin biosynthesis. Catalyzes the decarboxylative condensation of pimeloyl-[acyl-carrier protein] and L-alanine to produce 8-amino-7-oxononanoate (AON), [acyl-carrier protein], and carbon dioxide. In Pseudescherichia vulneris (Escherichia vulneris), this protein is 8-amino-7-oxononanoate synthase.